Consider the following 182-residue polypeptide: ADP-ribosylation factor 1 (182 aa).

Gly-2 carries N-myristoyl glycine lipidation. Positions 3–16 (NVFANLFKGLFGKK) are important for the stable binding to the membranes. GTP contacts are provided by residues 24 to 32 (GLDAAGKTT), 126 to 129 (NKQD), and Ala-160.

It belongs to the small GTPase superfamily. Arf family.

The protein resides in the golgi apparatus membrane. Its subcellular location is the cytoplasm. It localises to the cytosol. It carries out the reaction GTP + H2O = GDP + phosphate + H(+). With respect to regulation, alternates between an inactive GDP-bound form and an active GTP-bound form. Activated by a guanine nucleotide-exchange factor (GEF) and inactivated by GTPase-activating protein (GAP). Its function is as follows. Small GTPase involved in protein trafficking between different compartments. Modulates vesicle budding and uncoating within the Golgi complex. In its GTP-bound form, triggers the recruitment of coatomer proteins to the Golgi membrane. The hydrolysis of ARF1-bound GTP, which is mediated by ARFGAPs proteins, is required for dissociation of coat proteins from Golgi membranes and vesicles. Has a role in eye development. Required for cleavage furrow ingression in embryonic cells. In Drosophila melanogaster (Fruit fly), this protein is ADP-ribosylation factor 1.